Consider the following 61-residue polypeptide: Photosystem II reaction center protein K (61 aa).

Residues 1–24 (MLNIFSLISICLNSALYSSSFFFG) constitute a propeptide that is removed on maturation. A helical transmembrane segment spans residues 40–60 (MPVIPVFFFLLAFVWQAAVSF).

The protein belongs to the PsbK family. As to quaternary structure, PSII is composed of 1 copy each of membrane proteins PsbA, PsbB, PsbC, PsbD, PsbE, PsbF, PsbH, PsbI, PsbJ, PsbK, PsbL, PsbM, PsbT, PsbX, PsbY, PsbZ, Psb30/Ycf12, at least 3 peripheral proteins of the oxygen-evolving complex and a large number of cofactors. It forms dimeric complexes.

Its subcellular location is the plastid. It is found in the chloroplast thylakoid membrane. Functionally, one of the components of the core complex of photosystem II (PSII). PSII is a light-driven water:plastoquinone oxidoreductase that uses light energy to abstract electrons from H(2)O, generating O(2) and a proton gradient subsequently used for ATP formation. It consists of a core antenna complex that captures photons, and an electron transfer chain that converts photonic excitation into a charge separation. This is Photosystem II reaction center protein K from Jasminum nudiflorum (Winter jasmine).